The following is a 92-amino-acid chain: MSRSLKKNPFVANNLLLKIHKLNTREEKEIIVTWSRASTIIPTMIGHTIAIHNGKEHLPVYVTDRMVGHKLGEFAPTLTFQGHARNDSKFRR.

Belongs to the universal ribosomal protein uS19 family.

It is found in the plastid. The protein resides in the chloroplast. In terms of biological role, protein S19 forms a complex with S13 that binds strongly to the 16S ribosomal RNA. This chain is Small ribosomal subunit protein uS19c, found in Amborella trichopoda.